The primary structure comprises 497 residues: POU domain, class 3, transcription factor 3 (497 aa).

The segment covering 31–51 has biased composition (gly residues); that stretch reads GGGGGGGGGGGGAGGGGGGMQ. Disordered regions lie at residues 31–62, 121–189, 230–316, and 458–497; these read GGGGGGGGGGGGAGGGGGGMQPGSAAVTSGAY, WSGS…WGAA, NGML…TPTS, and EKRMTPPGIQQQTPDDVYSQVGTVSADTPPPHHGLQTSVQ. Pro residues-rich tracts occupy residues 133-145 and 170-180; these read QQPPRPPPPPPQG and HLGPPPPPPHQ. Gly residues predominate over residues 240-250; it reads GGGGGGAGGGA. Residues 269–286 show a composition bias toward basic residues; that stretch reads HHHHHHHHAHPHPPHPHH. One can recognise a POU-specific domain in the interval 311–385; it reads EDTPTSDDLE…LLNKWLEEAD (75 aa). Positions 403–462 form a DNA-binding region, homeobox; it reads KRKKRTSIEVSVKGALESHFLKCPKPSAQEITNLADSLQLEKEVVRVWFCNRRQKEKRMT. Positions 465–483 are enriched in polar residues; that stretch reads GIQQQTPDDVYSQVGTVSA.

Belongs to the POU transcription factor family. Class-3 subfamily. In terms of assembly, homodimer. Brain.

It localises to the nucleus. Transcription factor that acts synergistically with SOX11 and SOX4. Plays a role in neuronal development. Is implicated in an enhancer activity at the embryonic met-mesencephalic junction; the enhancer element contains the octamer motif (5'-ATTTGCAT-3'). The sequence is that of POU domain, class 3, transcription factor 3 (Pou3f3) from Rattus norvegicus (Rat).